A 960-amino-acid chain; its full sequence is Leucine--tRNA ligase (960 aa).

The 'HIGH' region motif lies at 71 to 82 (PYPSGAGLHVGH). The short motif at 729–733 (KMGKS) is the 'KMSKS' region element. K732 is a binding site for ATP.

It belongs to the class-I aminoacyl-tRNA synthetase family.

The protein resides in the cytoplasm. It catalyses the reaction tRNA(Leu) + L-leucine + ATP = L-leucyl-tRNA(Leu) + AMP + diphosphate. The chain is Leucine--tRNA ligase from Corynebacterium diphtheriae (strain ATCC 700971 / NCTC 13129 / Biotype gravis).